Reading from the N-terminus, the 551-residue chain is Chaperonin GroEL (551 aa).

ATP-binding positions include 29-32 (TAGP), K50, 86-90 (DGTTT), G417, and D499.

This sequence belongs to the chaperonin (HSP60) family. As to quaternary structure, forms a cylinder of 14 subunits composed of two heptameric rings stacked back-to-back. Interacts with the co-chaperonin GroES.

The protein localises to the cytoplasm. The enzyme catalyses ATP + H2O + a folded polypeptide = ADP + phosphate + an unfolded polypeptide.. In terms of biological role, together with its co-chaperonin GroES, plays an essential role in assisting protein folding. The GroEL-GroES system forms a nano-cage that allows encapsulation of the non-native substrate proteins and provides a physical environment optimized to promote and accelerate protein folding. This Ehrlichia ruminantium (strain Gardel) protein is Chaperonin GroEL.